A 774-amino-acid polypeptide reads, in one-letter code: MEGFLGFNHNHCFIVLFFVSLSLAQYEHWPYLPGYPEPPPQVYQPPRRPADVPKIQLRLAGQKRKHNEGRVEVFYNGEWGTVCDDDFSIHAAHVICRELGYVEAVSWLPSSKYGKGEGKIWMDNVHCNGKEATLAACTSNGWGVTDCKHTEDVGVVCSEKRIPGFKFDNSLLNQIENMNIQVEDIRIRPILATYRKRVPVTEGYVEVKDEGTWKQICDKHWTMKNSRVVCGMFGFPSERKYNTKVYKMFASRRKQHYWAYSMDCTGNEAHISSCKLGNHLNVDTEKNATCDNGMPAVASCVPGRAFAPSSHSGFRKAFRQEQPLVRLKGGANTGEGRVEVLKNGEWGTVCDDNWNLVSASVVCRELGFGSAKEAITGARLGQGMGPIHLNEIDCTGFEKSLTDCKFNMESQGCNHEEDAAVRCNVPAMGFQNQLRLVGGRNPYEGRVEVLAERNGTLRWGTVCSQGWSTVEAMVVCRQLGLGFASHAFQETWYWHGDVSADSVVMSGVKCSGTEMSLAHCRHDGADVSCPRGGGRFGAGVSCSETAPDLVLNAELVEQTAYLEDRPMFMLQCAQEENCLASSAVNTSVTSGYRRLLRFSSQIHNNGQSDFRPKNGRHAWVWHDCHRHYHSMEVFTHYDLLNLNGTKVAEGHKASFCLEDTECEADVQKQYECANFGEQGITVGCWDVYRHDIDCQWIDITDVPPGDYLFQVVINPNYEVAESDYSNNVMKCRSRYDGQRIWMYNSVHNGANQDGDTEERFSAYWKLGNSILFSR.

Residues 1–24 (MEGFLGFNHNHCFIVLFFVSLSLA) form the signal peptide. SRCR domains follow at residues 57 to 158 (LRLA…VVCS), 187 to 301 (IRPI…ASCV), 325 to 424 (VRLK…VRCN), and 434 to 543 (LRLV…VSCS). 9 cysteine pairs are disulfide-bonded: C83/C147, C96/C157, C127/C137, C217/C290, C230/C300, C264/C274, C350/C413, C363/C423, and C394/C404. N287 carries an N-linked (GlcNAc...) asparagine glycan. N454 carries an N-linked (GlcNAc...) asparagine glycan. Disulfide bonds link C463-C529, C476-C542, and C510-C520. The lysyl-oxidase like stretch occupies residues 547–751 (PDLVLNAELV…MYNSVHNGAN (205 aa)). Positions 548 and 549 each coordinate Ca(2+). 4 cysteine pairs are disulfide-bonded: C572–C624, C578–C694, C656–C672, and C662–C684. Cu cation contacts are provided by H625, H627, and H629. Residue N643 is glycosylated (N-linked (GlcNAc...) asparagine). Positions 652-688 (KASFCLEDTECEADVQKQYECANFGEQGITVGCWDVY) form a cross-link, lysine tyrosylquinone (Lys-Tyr). Position 688 is a 2',4',5'-topaquinone (Y688). Ca(2+) is bound by residues E721, D723, N726, and N727.

Belongs to the lysyl oxidase family. It depends on Cu cation as a cofactor. Requires lysine tyrosylquinone residue as cofactor. The lysine tyrosylquinone cross-link (LTQ) is generated by condensation of the epsilon-amino group of a lysine with a topaquinone produced by oxidation of tyrosine.

The protein localises to the secreted. It is found in the extracellular space. It localises to the extracellular matrix. The protein resides in the basement membrane. Its subcellular location is the nucleus. The protein localises to the chromosome. It is found in the endoplasmic reticulum. It carries out the reaction L-lysyl-[protein] + O2 + H2O = (S)-2-amino-6-oxohexanoyl-[protein] + H2O2 + NH4(+). Functionally, mediates the post-translational oxidative deamination of lysine residues on target proteins leading to the formation of deaminated lysine (allysine). Acts as a transcription corepressor and specifically mediates deamination of trimethylated 'Lys-4' of histone H3 (H3K4me3), a specific tag for epigenetic transcriptional activation. Shows no activity against histone H3 when it is trimethylated on 'Lys-9' (H3K9me3) or 'Lys-27' (H3K27me3) or when 'Lys-4' is monomethylated (H3K4me1) or dimethylated (H3K4me2). Also mediates deamination of methylated TAF10, a member of the transcription factor IID (TFIID) complex, which induces release of TAF10 from promoters, leading to inhibition of TFIID-dependent transcription. LOXL2-mediated deamination of TAF10 results in transcriptional repression of genes required for embryonic stem cell pluripotency including POU5F1/OCT4, NANOG, KLF4 and SOX2. Involved in epithelial to mesenchymal transition (EMT) via interaction with SNAI1 and participates in repression of E-cadherin CDH1, probably by mediating deamination of histone H3. During EMT, involved with SNAI1 in negatively regulating pericentromeric heterochromatin transcription. SNAI1 recruits LOXL2 to pericentromeric regions to oxidize histone H3 and repress transcription which leads to release of heterochromatin component CBX5/HP1A, enabling chromatin reorganization and acquisition of mesenchymal traits. Interacts with the endoplasmic reticulum protein HSPA5 which activates the IRE1-XBP1 pathway of the unfolded protein response, leading to expression of several transcription factors involved in EMT and subsequent EMT induction. When secreted into the extracellular matrix, promotes cross-linking of extracellular matrix proteins by mediating oxidative deamination of peptidyl lysine residues in precursors to fibrous collagen and elastin. Acts as a regulator of sprouting angiogenesis, probably via collagen IV scaffolding. Acts as a regulator of chondrocyte differentiation, probably by regulating expression of factors that control chondrocyte differentiation. The polypeptide is Lysyl oxidase homolog 2 (LOXL2) (Gallus gallus (Chicken)).